A 996-amino-acid chain; its full sequence is Filament-like plant protein 5 (996 aa).

Residues 1 to 20 are disordered; the sequence is MEGRGWPWKRKSSDKATTEK. Coiled-coil stretches lie at residues 59 to 94, 133 to 248, 280 to 301, and 359 to 387; these read THMSRMEDQVKLFEVQVKDLKEKLTLAHSEINTKES, TAED…KYDL, VKKIAKLEAECHRLRGLLRKKL, and LTRRTLEMEEEIQTLKEHLSARNNELQVS. Disordered regions lie at residues 409 to 482 and 496 to 534; these read NNDK…SSSR and VGSDPDGANSASKSSNSVCSRRSVEKQSSSKSSEPDEDT. Over residues 417 to 428 the composition is skewed to low complexity; that stretch reads SNSRNLSESLSS. The segment covering 471–482 has biased composition (polar residues); the sequence is VNGSSKPRSSSR. Over residues 503-527 the composition is skewed to low complexity; sequence ANSASKSSNSVCSRRSVEKQSSSKS. 3 coiled-coil regions span residues 601–622, 737–841, and 876–906; these read QNSEKEQKNTKQQDLEAAVANI, DSSC…FTTE, and NQEKDIVSATEKLAACQETIHLLSQQLQSLQ. A disordered region spans residues 962–996; that stretch reads IMKSSSVSSSSKEDNEKHTRGLGRFFSSKSKNSAR.

Belongs to the FPP family. In terms of assembly, interacts with WPP/MAF proteins.

The sequence is that of Filament-like plant protein 5 (FPP5) from Arabidopsis thaliana (Mouse-ear cress).